Consider the following 152-residue polypeptide: Putative pre-16S rRNA nuclease (152 aa).

This sequence belongs to the YqgF nuclease family.

The protein resides in the cytoplasm. Functionally, could be a nuclease involved in processing of the 5'-end of pre-16S rRNA. In Nitrosococcus oceani (strain ATCC 19707 / BCRC 17464 / JCM 30415 / NCIMB 11848 / C-107), this protein is Putative pre-16S rRNA nuclease.